The primary structure comprises 458 residues: UDP-N-acetylmuramate--L-alanine ligase (458 aa).

ATP is bound at residue 118–124; sequence GTHGKTT.

The protein belongs to the MurCDEF family.

It localises to the cytoplasm. It carries out the reaction UDP-N-acetyl-alpha-D-muramate + L-alanine + ATP = UDP-N-acetyl-alpha-D-muramoyl-L-alanine + ADP + phosphate + H(+). The protein operates within cell wall biogenesis; peptidoglycan biosynthesis. In terms of biological role, cell wall formation. This is UDP-N-acetylmuramate--L-alanine ligase from Clostridium botulinum (strain Kyoto / Type A2).